A 1186-amino-acid chain; its full sequence is Myelin transcription factor 1-like protein (1186 aa).

The tract at residues 1–21 is disordered; sequence MEVDTEEKRHRTRSKGVRVPV. A CCHHC-type 1 zinc finger spans residues 22–65; sequence EPAIQELFSCPTPGCDGSGHVSGKYARHRSVYGCPLAKKRKTQD. Residues Cys-31, Cys-36, His-49, and Cys-55 each contribute to the Zn(2+) site. Disordered regions lie at residues 56-175 and 220-247; these read PLAK…QMNC and RTES…GRKS. The span at 86-169 shows a compositional bias: acidic residues; that stretch reads SVDECDDSDG…EEEEEEEENE (84 aa). Ser-250 is modified (phosphoserine). 2 disordered regions span residues 342–372 and 449–513; these read SETN…GRTP and REKM…GCDG. The span at 343–357 shows a compositional bias: polar residues; it reads ETNPQERNPQQNMNI. Composition is skewed to basic and acidic residues over residues 361 to 372, 449 to 487, and 495 to 505; these read VRPEEDFPGRTP, REKM…DSHV, and DPSRTEKKESK. 2 consecutive CCHHC-type zinc fingers follow at residues 497-540 and 541-584; these read SRTE…PPEI and LAMH…KLAK. Positions 506, 511, 524, 530, 550, 555, 568, and 574 each coordinate Zn(2+). 2 disordered regions span residues 659–709 and 753–780; these read RAIA…GGGS and KPQD…MNKQ. Over residues 666 to 683 the composition is skewed to basic and acidic residues; the sequence is QTRDISPKGYDDAKRYCK. Residues 685–709 are compositionally biased toward low complexity; that stretch reads PSPSSSSTSSYAPSSSSNLSCGGGS. 3 consecutive CCHHC-type zinc fingers follow at residues 896–939, 945–988, and 998–1041; these read LATS…GIRI, DKED…QKDG, and KSVK…MKKA. Residues Cys-905, Cys-910, His-923, Cys-929, Cys-954, Cys-959, His-972, Cys-978, Cys-1007, Cys-1012, His-1025, and Cys-1031 each contribute to the Zn(2+) site. The stretch at 1056 to 1130 forms a coiled coil; sequence SNGIENDEEI…LANLSQSLIH (75 aa).

Belongs to the MYT1 family. Interacts with SIN3B.

It is found in the nucleus. It localises to the chromosome. In terms of biological role, transcription factor that plays a key role in neuronal differentiation by specifically repressing expression of non-neuronal genes during neuron differentiation. In contrast to other transcription repressors that inhibit specific lineages, mediates repression of multiple differentiation programs. Also represses expression of negative regulators of neurogenesis, such as members of the Notch signaling pathway, including HES1. The combination of three transcription factors, ASCL1, POU3F2/BRN2 and MYT1L, is sufficient to reprogram fibroblasts and other somatic cells into induced neuronal (iN) cells in vitro. Directly binds the 5'-AAGTT-3' core motif present on the promoter of target genes and represses transcription by recruiting a multiprotein complex containing SIN3B. The 5'-AAGTT-3' core motif is absent from the promoter of neural genes. The sequence is that of Myelin transcription factor 1-like protein from Homo sapiens (Human).